The primary structure comprises 435 residues: Trigger factor (435 aa).

Residues 164–249 enclose the PPIase FKBP-type domain; it reads GDFAKFDFEG…LHEIQGKKAG (86 aa).

The protein belongs to the FKBP-type PPIase family. Tig subfamily.

The protein resides in the cytoplasm. It carries out the reaction [protein]-peptidylproline (omega=180) = [protein]-peptidylproline (omega=0). Functionally, involved in protein export. Acts as a chaperone by maintaining the newly synthesized protein in an open conformation. Functions as a peptidyl-prolyl cis-trans isomerase. This chain is Trigger factor, found in Campylobacter fetus subsp. fetus (strain 82-40).